The chain runs to 442 residues: 4-alpha-glucanotransferase (442 aa).

Ca(2+) is bound by residues Asp13, Asn15, Asp17, Val19, and Asp21. Asp186 serves as the catalytic Nucleophile. Residue Glu216 is the Proton donor of the active site.

This sequence belongs to the glycosyl hydrolase 13 family. In terms of assembly, monomer. Ca(2+) is required as a cofactor.

It localises to the cytoplasm. It catalyses the reaction Transfers a segment of a (1-&gt;4)-alpha-D-glucan to a new position in an acceptor, which may be glucose or a (1-&gt;4)-alpha-D-glucan.. Its function is as follows. Hydrolyzes the 1,4-alpha-glycoside bonds in oligomeric and polymeric 1,4-alpha-glucans and transfers oligosaccharides (maltotriose being the shortest one) to acceptor maltodextrins. The sequence is that of 4-alpha-glucanotransferase (mgtA) from Thermotoga neapolitana.